Reading from the N-terminus, the 659-residue chain is MPDVSQRIEALREQIEEANYQYYGLDQPTLSDAEYDALLQELIRLEKEHPEFLTPDSPSQRVGGYIAKEFPKVRHAEALLSLDNAFDAGDLLEFDRRVRALVAEVEYVVELKIDGLTVALTYEDGALVRGATRGDGEVGEEITANLKTIPAIPLRLRKQADRLDVRGEGYMPKGSFLRLNQEREEAGQPLFANPRNAAAGSLRQLDSRITAQRKLGYFAYQVLTPEEGELASQTAVLDYLKEQGFSVNPEYRVFSAIEEVIAYCGEMVEKRHNYPYDIDGLVIKVNDIAQQRELGFTAKSPRWAIAYKFPAEQVETVVEDIVIRVGRTGVLTPTAYLTPVFVAGSTVGRATLHNLDNIRAKDVRIGDHVLIQKAGDVIPEVVKILPEKRTGGERIFEMPELCPECQSPVIREEGEAAHRCTSITCPARQREAIIHFVSRNAMNIDGLGPAVIYQLLEAGLIKDAADLYALEYDALVPLERLGKKSAENLLKAIEDSKERGLAPLIFGLGIRHVGEKAGKILAQKYGTMEDLEKAQVEELQEIPDVGPAMAQSVAQFFQQESTHHFLNKLRQAGVVMSAQHSAKPQIFAGKSIVVTGSLQRWDRHYVETMIEEFGGKAASSVSKKTAFVVAGEKAGSKLAKAKELGIPVLSEEEFAELLP.

Residues 32 to 36 (DAEYD), 81 to 82 (SL), and Glu-110 contribute to the NAD(+) site. The active-site N6-AMP-lysine intermediate is Lys-112. NAD(+) is bound by residues Arg-133, Glu-168, Lys-284, and Lys-308. Residues Cys-402, Cys-405, Cys-420, and Cys-425 each coordinate Zn(2+). Positions 582–659 (AKPQIFAGKS…SEEEFAELLP (78 aa)) constitute a BRCT domain.

Belongs to the NAD-dependent DNA ligase family. LigA subfamily. Mg(2+) serves as cofactor. Requires Mn(2+) as cofactor.

It carries out the reaction NAD(+) + (deoxyribonucleotide)n-3'-hydroxyl + 5'-phospho-(deoxyribonucleotide)m = (deoxyribonucleotide)n+m + AMP + beta-nicotinamide D-nucleotide.. Functionally, DNA ligase that catalyzes the formation of phosphodiester linkages between 5'-phosphoryl and 3'-hydroxyl groups in double-stranded DNA using NAD as a coenzyme and as the energy source for the reaction. It is essential for DNA replication and repair of damaged DNA. The polypeptide is DNA ligase (Desulfitobacterium hafniense (strain Y51)).